Here is a 353-residue protein sequence, read N- to C-terminus: 3-dehydroquinate synthase (353 aa).

Residues 61–66, 119–120, Lys-132, and Lys-141 contribute to the NAD(+) site; these read DGEEAK and TT. Glu-174, His-238, and His-254 together coordinate Zn(2+).

The protein belongs to the sugar phosphate cyclases superfamily. Dehydroquinate synthase family. The cofactor is Co(2+). Zn(2+) is required as a cofactor. Requires NAD(+) as cofactor.

Its subcellular location is the cytoplasm. It catalyses the reaction 7-phospho-2-dehydro-3-deoxy-D-arabino-heptonate = 3-dehydroquinate + phosphate. It functions in the pathway metabolic intermediate biosynthesis; chorismate biosynthesis; chorismate from D-erythrose 4-phosphate and phosphoenolpyruvate: step 2/7. In terms of biological role, catalyzes the conversion of 3-deoxy-D-arabino-heptulosonate 7-phosphate (DAHP) to dehydroquinate (DHQ). The chain is 3-dehydroquinate synthase from Sulfolobus acidocaldarius (strain ATCC 33909 / DSM 639 / JCM 8929 / NBRC 15157 / NCIMB 11770).